A 167-amino-acid polypeptide reads, in one-letter code: Crossover junction endodeoxyribonuclease RuvC (167 aa).

Active-site residues include Asp11, Glu71, and Asp143. Residues Asp11, Glu71, and Asp143 each coordinate Mg(2+).

It belongs to the RuvC family. As to quaternary structure, homodimer which binds Holliday junction (HJ) DNA. The HJ becomes 2-fold symmetrical on binding to RuvC with unstacked arms; it has a different conformation from HJ DNA in complex with RuvA. In the full resolvosome a probable DNA-RuvA(4)-RuvB(12)-RuvC(2) complex forms which resolves the HJ. Mg(2+) serves as cofactor.

The protein localises to the cytoplasm. It catalyses the reaction Endonucleolytic cleavage at a junction such as a reciprocal single-stranded crossover between two homologous DNA duplexes (Holliday junction).. Its function is as follows. The RuvA-RuvB-RuvC complex processes Holliday junction (HJ) DNA during genetic recombination and DNA repair. Endonuclease that resolves HJ intermediates. Cleaves cruciform DNA by making single-stranded nicks across the HJ at symmetrical positions within the homologous arms, yielding a 5'-phosphate and a 3'-hydroxyl group; requires a central core of homology in the junction. The consensus cleavage sequence is 5'-(A/T)TT(C/G)-3'. Cleavage occurs on the 3'-side of the TT dinucleotide at the point of strand exchange. HJ branch migration catalyzed by RuvA-RuvB allows RuvC to scan DNA until it finds its consensus sequence, where it cleaves and resolves the cruciform DNA. The chain is Crossover junction endodeoxyribonuclease RuvC from Hyphomonas neptunium (strain ATCC 15444).